The chain runs to 293 residues: ATP synthase gamma chain (293 aa).

It belongs to the ATPase gamma chain family. In terms of assembly, F-type ATPases have 2 components, CF(1) - the catalytic core - and CF(0) - the membrane proton channel. CF(1) has five subunits: alpha(3), beta(3), gamma(1), delta(1), epsilon(1). CF(0) has three main subunits: a, b and c.

It is found in the cell inner membrane. Produces ATP from ADP in the presence of a proton gradient across the membrane. The gamma chain is believed to be important in regulating ATPase activity and the flow of protons through the CF(0) complex. This chain is ATP synthase gamma chain, found in Psychrobacter arcticus (strain DSM 17307 / VKM B-2377 / 273-4).